The chain runs to 124 residues: UPF0102 protein Haur_0145 (124 aa).

This sequence belongs to the UPF0102 family.

The chain is UPF0102 protein Haur_0145 from Herpetosiphon aurantiacus (strain ATCC 23779 / DSM 785 / 114-95).